We begin with the raw amino-acid sequence, 972 residues long: Peptidyl-glycine alpha-amidating monooxygenase (972 aa).

A signal peptide spans 1–20 (MAGFRSLLVLLLVFPSGCVG). A peptidylglycine alpha-hydroxylating monooxygenase region spans residues 1–494 (MAGFRSLLVL…EGTWEPEHTG (494 aa)). A propeptide spanning residues 21 to 30 (FRSPLSVFKR) is cleaved from the precursor. Topologically, residues 31–873 (FKETTRSFSN…VPAVLITTLL (843 aa)) are intragranular. 5 cysteine pairs are disulfide-bonded: Cys42/Cys181, Cys76/Cys121, Cys109/Cys126, Cys222/Cys329, and Cys288/Cys310. Residues His102 and His103 each coordinate Cu(2+). Cu(2+) contacts are provided by His167, His237, His239, and Met309. Residues 495–817 (DFHVEEALDW…STEKMEHRSV (323 aa)) are peptidyl-alpha-hydroxyglycine alpha-amidating lyase. NHL repeat units lie at residues 498–541 (VEEA…NSFD), 567–608 (AAVL…LDPK), 617–662 (LGRS…FSPS), and 670–714 (GEAS…FKTD). Val517 provides a ligand contact to Ca(2+). Arg530 lines the a protein pocket. His582 is a Zn(2+) binding site. Leu584 contributes to the Ca(2+) binding site. Cys631 and Cys652 form a disulfide bridge. Tyr651 contributes to the a protein binding site. His687 serves as a coordination point for Zn(2+). Residues Cys699 and Cys710 are joined by a disulfide bond. Residue Arg703 coordinates a protein. The N-linked (GlcNAc...) asparagine glycan is linked to Asn762. An NHL 5 repeat occupies 766–809 (GEIIDVFKPVRKHFDMPHDIAASEDGTVYVGDAHTNTVWKFTST). His783 provides a ligand contact to Zn(2+). A Ca(2+)-binding site is contributed by Asp784. A helical membrane pass occupies residues 874 to 897 (VIPVVVLLAIALFIRWKKSRAFGD). Residues 898–972 (SERKLEASSG…APPPAPAPSS (75 aa)) lie on the Cytoplasmic side of the membrane. Positions 925 to 942 (NFFASRKGYSRKGFDRLS) are interaction with RASSF9. Phosphoserine occurs at positions 929 and 942. Residues 937-972 (GFDRLSTEGSDQEKDEDASESEEEYSAPPPAPAPSS) are disordered. Thr943 bears the Phosphothreonine mark. Ser946 carries the post-translational modification Phosphoserine; by UHMK1. Positions 949 to 961 (EKDEDASESEEEY) are enriched in acidic residues. At Ser957 the chain carries Phosphoserine. The segment covering 963-972 (APPPAPAPSS) has biased composition (pro residues).

In the C-terminal section; belongs to the peptidyl-alpha-hydroxyglycine alpha-amidating lyase family. This sequence in the N-terminal section; belongs to the copper type II ascorbate-dependent monooxygenase family. Monomer. Interacts with RASSF9. Zn(2+) is required as a cofactor. Cu(2+) serves as cofactor.

Its subcellular location is the cytoplasmic vesicle. It localises to the secretory vesicle membrane. The catalysed reaction is a [peptide]-C-terminal glycine + 2 L-ascorbate + O2 = a [peptide]-C-terminal (2S)-2-hydroxyglycine + 2 monodehydro-L-ascorbate radical + H2O. The enzyme catalyses a [peptide]-C-terminal (2S)-2-hydroxyglycine = a [peptide]-C-terminal amide + glyoxylate. It catalyses the reaction N-dodecanoylglycine + 2 L-ascorbate + O2 = N-dodecanoyl-(2S)-hydroxyglycine + 2 monodehydro-L-ascorbate radical + H2O. It carries out the reaction N-dodecanoyl-(2S)-hydroxyglycine = dodecanamide + glyoxylate. The catalysed reaction is N-(9Z,12Z,15Z)-octadecatrienoylglycine + 2 L-ascorbate + O2 = N-(9Z,12Z,15Z)-octadecatrienoyl-(2S)-hydroxyglycine + 2 monodehydro-L-ascorbate radical + H2O. The enzyme catalyses N-(9Z,12Z,15Z)-octadecatrienoyl-(2S)-hydroxyglycine = (9Z,12Z,15Z)-octadecatrienamide + glyoxylate. It catalyses the reaction N-(9Z-octadecenoyl)glycine + 2 L-ascorbate + O2 = N-(9Z-octadecenoyl)-(2S)-hydroxyglycine + 2 monodehydro-L-ascorbate radical + H2O. It carries out the reaction N-(9Z-octadecenoyl)-(2S)-hydroxyglycine = (9Z)-octadecenamide + glyoxylate. The catalysed reaction is N-tetradecanoylglycine + 2 L-ascorbate + O2 = N-tetradecanoyl-(2S)-hydroxyglycine + 2 monodehydro-L-ascorbate radical + H2O. The enzyme catalyses N-tetradecanoyl-(2S)-hydroxyglycine = tetradecamide + glyoxylate. It catalyses the reaction N-decanoylglycine + 2 L-ascorbate + O2 = N-decanoyl-(2S)-hydroxyglycine + 2 monodehydro-L-ascorbate radical + H2O. It carries out the reaction N-decanoyl-(2S)-hydroxyglycine = decanamide + glyoxylate. The catalysed reaction is N-octanoylglycine + 2 L-ascorbate + O2 = N-octanoyl-(2S)-hydroxyglycine + 2 monodehydro-L-ascorbate radical + H2O. The enzyme catalyses N-octanoyl-(2S)-hydroxyglycine = octanamide + glyoxylate. PAM activity is inhibited by EDTA, phenylglyoxal and diethyl pyrocarbonate. PAL activity is stimulated by cadmium and inhibited by mercury. Functionally, bifunctional enzyme that catalyzes amidation of the C-terminus of proteins. Alpha-amidation is present at the C-terminus of many endocrine hormones and neuropeptides and is required for their activity. C-terminal amidation also takes place in response to protein fragmentation triggered by oxidative stress, promoting degradation of amidated protein fragments by the proteasome. Alpha-amidation involves two sequential reactions, both of which are catalyzed by separate catalytic domains of the enzyme. The first step, catalyzed by peptidyl alpha-hydroxylating monooxygenase (PHM) domain, is the copper-, ascorbate-, and O2- dependent stereospecific hydroxylation (with S stereochemistry) at the alpha-carbon (C-alpha) of the C-terminal glycine of the peptidylglycine substrate. The second step, catalyzed by the peptidylglycine amidoglycolate lyase (PAL) domain, is the zinc-dependent cleavage of the N-C-alpha bond, producing the alpha-amidated peptide and glyoxylate. Similarly, catalyzes the two-step conversion of an N-fatty acylglycine to a primary fatty acid amide and glyoxylate. The sequence is that of Peptidyl-glycine alpha-amidating monooxygenase (PAM) from Bos taurus (Bovine).